The chain runs to 472 residues: Protein translocase subunit SecD (472 aa).

The next 6 membrane-spanning stretches (helical) occupy residues 7-27, 298-318, 326-345, 349-368, 392-414, and 432-452; these read LLLL…KLPL, LVAG…YYRL, SLMI…GVTL, GIAG…VLIF, AFSS…FWFG, and SLFT…LSLP.

It belongs to the SecD/SecF family. SecD subfamily. As to quaternary structure, forms a complex with SecF. Part of the essential Sec protein translocation apparatus which comprises SecA, SecYEG and auxiliary proteins SecDF. Other proteins may also be involved.

The protein resides in the cell inner membrane. Part of the Sec protein translocase complex. Interacts with the SecYEG preprotein conducting channel. SecDF uses the proton motive force (PMF) to complete protein translocation after the ATP-dependent function of SecA. In terms of biological role, probably participates in protein translocation into and across both the cytoplasmic and thylakoid membranes in cyanobacterial cells. In Synechocystis sp. (strain ATCC 27184 / PCC 6803 / Kazusa), this protein is Protein translocase subunit SecD.